A 61-amino-acid polypeptide reads, in one-letter code: Bactericidin B-5P (61 aa).

A signal peptide spans 1 to 22; it reads MNFSRVLFFVFACLSAFAMASA. Positions 23 to 24 are cleaved as a propeptide — removed by a dipeptidylpeptidase; that stretch reads AP. Glycine amide is present on G60.

Belongs to the cecropin family.

Its subcellular location is the secreted. In terms of biological role, cecropins have lytic and antibacterial activity against several Gram-positive and Gram-negative bacteria. The polypeptide is Bactericidin B-5P (Manduca sexta (Tobacco hawkmoth)).